The chain runs to 817 residues: TPR repeat-containing protein C19B12.01 (817 aa).

Disordered stretches follow at residues 276 to 298 and 386 to 413; these read DQKS…PNHP and GKSP…DGEN. TPR repeat units follow at residues 459-492, 521-554, 555-588, and 625-658; these read LQMW…DPYD, APAQ…NPLS, YPTW…NPED, and WRIW…KGKD.

The polypeptide is TPR repeat-containing protein C19B12.01 (Schizosaccharomyces pombe (strain 972 / ATCC 24843) (Fission yeast)).